Reading from the N-terminus, the 339-residue chain is Ketol-acid reductoisomerase (NADP(+)) (339 aa).

A KARI N-terminal Rossmann domain is found at 1-182 (MRVYYDRDAD…GGGRSGIIET (182 aa)). Residues 24–27 (YGSQ), Lys-48, Ser-51, Thr-53, and 83–86 (DELQ) contribute to the NADP(+) site. The active site involves His-108. Residue Gly-134 coordinates NADP(+). A KARI C-terminal knotted domain is found at 183–328 (NFREECETDL…AKLRAMMPWI (146 aa)). Mg(2+)-binding residues include Asp-191, Glu-195, Glu-227, and Glu-231. Substrate is bound at residue Ser-252.

Belongs to the ketol-acid reductoisomerase family. The cofactor is Mg(2+).

The catalysed reaction is (2R)-2,3-dihydroxy-3-methylbutanoate + NADP(+) = (2S)-2-acetolactate + NADPH + H(+). It catalyses the reaction (2R,3R)-2,3-dihydroxy-3-methylpentanoate + NADP(+) = (S)-2-ethyl-2-hydroxy-3-oxobutanoate + NADPH + H(+). It functions in the pathway amino-acid biosynthesis; L-isoleucine biosynthesis; L-isoleucine from 2-oxobutanoate: step 2/4. Its pathway is amino-acid biosynthesis; L-valine biosynthesis; L-valine from pyruvate: step 2/4. In terms of biological role, involved in the biosynthesis of branched-chain amino acids (BCAA). Catalyzes an alkyl-migration followed by a ketol-acid reduction of (S)-2-acetolactate (S2AL) to yield (R)-2,3-dihydroxy-isovalerate. In the isomerase reaction, S2AL is rearranged via a Mg-dependent methyl migration to produce 3-hydroxy-3-methyl-2-ketobutyrate (HMKB). In the reductase reaction, this 2-ketoacid undergoes a metal-dependent reduction by NADPH to yield (R)-2,3-dihydroxy-isovalerate. The sequence is that of Ketol-acid reductoisomerase (NADP(+)) from Mesorhizobium japonicum (strain LMG 29417 / CECT 9101 / MAFF 303099) (Mesorhizobium loti (strain MAFF 303099)).